Consider the following 168-residue polypeptide: MKKRFWFLAGVVSVVLAIQVKNAVFIDYKVEGVSMNPTFQEGNELLVNKFSHRFKTIHRFDIVLFKGPDHKVLIKRVIGLPGETIKYKDDQLYVNGKQVAEPFLKHLKSVSAGSHVTGDFSLKDVTGTSKVPKGKYFVVGDNRIYSFDSRHFGPIREKNIVGVISDAE.

Topologically, residues 1–6 are cytoplasmic; it reads MKKRFW. A helical transmembrane segment spans residues 7–26; sequence FLAGVVSVVLAIQVKNAVFI. Residues 27–168 are Extracellular-facing; the sequence is DYKVEGVSMN…NIVGVISDAE (142 aa). Residues Ser34 and Lys75 contribute to the active site.

It belongs to the peptidase S26 family.

It localises to the cell membrane. The enzyme catalyses Cleavage of hydrophobic, N-terminal signal or leader sequences from secreted and periplasmic proteins.. This is Signal peptidase I V (sipV) from Bacillus subtilis (strain 168).